Reading from the N-terminus, the 138-residue chain is Acidic phospholipase A2 Cvv-E6f (138 aa).

The N-terminal stretch at 1 to 16 (MRTLWIVAVLLLGVEG) is a signal peptide. Intrachain disulfides connect C42-C131, C44-C60, C59-C111, C65-C138, C66-C104, C73-C97, and C91-C102. Ca(2+) is bound by residues Y43, G45, and G47. The active site involves H63. D64 contacts Ca(2+). D105 is a catalytic residue.

Requires Ca(2+) as cofactor. Expressed by the venom gland.

It is found in the secreted. It catalyses the reaction a 1,2-diacyl-sn-glycero-3-phosphocholine + H2O = a 1-acyl-sn-glycero-3-phosphocholine + a fatty acid + H(+). Functionally, snake venom phospholipase A2 (PLA2) that shows very low inhibition of ADP-induced platelet aggregation in platelet-rich plasma of human, rabbit and guinea pig. In vivo, shows efficient edema-inducing activities in rat paws. PLA2 catalyzes the calcium-dependent hydrolysis of the 2-acyl groups in 3-sn-phosphoglycerides. This Crotalus viridis viridis (Prairie rattlesnake) protein is Acidic phospholipase A2 Cvv-E6f.